A 258-amino-acid chain; its full sequence is Protein T1 (258 aa).

Residues 1 to 17 form the signal peptide; sequence MRRLCIILLVYVYATFA. N-linked (GlcNAc...) asparagine; by host glycosylation is found at N67, N151, and N172.

It belongs to the poxviruses A41 family.

This is Protein T1 from Rabbit fibroma virus (strain Kasza) (RFV).